The sequence spans 624 residues: MYKEKDFDIIVVGAGHAGCEAALATAKMGLQTALFTIYLETIAQLSCNPAIGGLAKGHLVREIDALGGIMAKVTDMAGIQFRMLNRSKGPAVWSLRAQADRILYNIYMRKILESTENLAIKQAMVEEIVVENGKVKGIITSLGVFYGAKAVIITPGTFLNGLIHIGLDSFEAGRAGEFPSKKLSESIKKLGLKMGRLKTGTPPRIDAKTIDFSKTEEQGGDDPPIPFSYSTKKINNPQVPCYITYTNEKTHEIILNNLDRSPLYSGKIKGIGPRYCPSIEDKVVKFRDKSRHQIFLEPEGLSRKEYYANGIPTSLPYDVQVAFVRTIPGLEDAEIMRPGYAIEYDFVYPTQIRHTLEVKGIEGLYLAGQINGTSGYEEAAAQGLMAGINAALKIKKQPPLILGRDEAYIGVLIDDLVTKGTQEPYRMFTSRAEFRLLLRHDNADLRLRDYGYKIGLVDEETYEEFNKKKELLQREIKRLKTTTIKPSEELNKALIEAQTTPVEEATFLDKLLKRPELNYDFIKKFAPSEVTLTKELEELVEIHIKYEGYIAKQMELVERMKQFEEKLIPENFDFNIPGLSREVIQKLTEVAPRTIGQAMRIPGVTPAAISILMVAVQKKTTVKK.

Residues 13-18 (GAGHAG), Val-125, and Ser-180 each bind FAD. 272–286 (GPRYCPSIEDKVVKF) lines the NAD(+) pocket. Gln-369 serves as a coordination point for FAD.

Belongs to the MnmG family. In terms of assembly, homodimer. Heterotetramer of two MnmE and two MnmG subunits. FAD is required as a cofactor.

The protein resides in the cytoplasm. Its function is as follows. NAD-binding protein involved in the addition of a carboxymethylaminomethyl (cmnm) group at the wobble position (U34) of certain tRNAs, forming tRNA-cmnm(5)s(2)U34. This is tRNA uridine 5-carboxymethylaminomethyl modification enzyme MnmG from Thermodesulfovibrio yellowstonii (strain ATCC 51303 / DSM 11347 / YP87).